A 395-amino-acid polypeptide reads, in one-letter code: Putative 8-amino-7-oxononanoate synthase (395 aa).

Substrate is bound at residue Arg23. 110-111 (GY) is a pyridoxal 5'-phosphate binding site. A substrate-binding site is contributed by His135. Pyridoxal 5'-phosphate-binding positions include Ser182, 207–210 (DEAH), and 239–242 (TFSK). At Lys242 the chain carries N6-(pyridoxal phosphate)lysine. Position 356 (Thr356) interacts with substrate.

The protein belongs to the class-II pyridoxal-phosphate-dependent aminotransferase family. BioF subfamily. As to quaternary structure, homodimer. The cofactor is pyridoxal 5'-phosphate.

The catalysed reaction is 6-carboxyhexanoyl-[ACP] + L-alanine + H(+) = (8S)-8-amino-7-oxononanoate + holo-[ACP] + CO2. It functions in the pathway cofactor biosynthesis; biotin biosynthesis. Catalyzes the decarboxylative condensation of pimeloyl-[acyl-carrier protein] and L-alanine to produce 8-amino-7-oxononanoate (AON), [acyl-carrier protein], and carbon dioxide. The chain is Putative 8-amino-7-oxononanoate synthase (bioF) from Bacillus cereus (strain ZK / E33L).